We begin with the raw amino-acid sequence, 259 residues long: Insulin-like growth factor-binding protein 1 (259 aa).

Positions 1-25 (MSEVPVARVWLVLLLLTVQVGVTAG) are cleaved as a signal peptide. An IGFBP N-terminal domain is found at 26–107 (APWQCAPCSA…TRGQGACVQE (82 aa)). Disulfide bonds link Cys-30/Cys-57, Cys-33/Cys-59, Cys-41/Cys-60, Cys-48/Cys-63, Cys-71/Cys-84, and Cys-78/Cys-104. Ser-45 carries the phosphoserine; by FAM20C modification. 4 positions are modified to phosphoserine: Ser-120, Ser-123, Ser-126, and Ser-144. Phosphoserine; by FAM20C is present on Ser-156. The residue at position 157 (Thr-157) is a Phosphothreonine; by FAM20C. Phosphotyrosine is present on Tyr-158. The Thyroglobulin type-1 domain maps to 173 to 251 (KEPCRIELYR…SPEIRGDPNC (79 aa)). Disulfide bonds link Cys-176-Cys-206, Cys-217-Cys-228, and Cys-230-Cys-251. A Phosphothreonine; by FAM20C modification is found at Thr-193. Phosphoserine; by FAM20C is present on residues Ser-194 and Ser-199. Phosphoserine; by FAM20C is present on Ser-242. The Cell attachment site motif lies at 246–248 (RGD).

As to quaternary structure, binds equally well IGF1 and IGF2. Interacts with integrin ITGA5:ITGB1. Interacts with VHL; this interaction inhibits HIF1A degradation. Phosphorylated; probably by casein kinase II. Phosphorylation alters the affinity of the protein for IGFs. In amniotic fluid, the unmodified protein is the most abundant form, while mono-, bi-, tri- and tetraphosphorylated forms are present in decreasing amounts. The phosphorylation state may influence the propensity to proteolysis.

It localises to the secreted. Multifunctional protein that plays a critical role in regulating the availability of IGFs such as IGF1 and IGF2 to their receptors and thereby regulates IGF-mediated cellular processes including cell migration, proliferation, differentiation or apoptosis in a cell-type specific manner. Also plays a positive role in cell migration by interacting with integrin ITGA5:ITGB1 through its RGD motif. Mechanistically, binding to integrins leads to activation of focal adhesion kinase/PTK2 and stimulation of the mitogen-activated protein kinase (MAPK) pathway. Regulates cardiomyocyte apoptosis by suppressing HIF-1alpha/HIF1A ubiquitination and subsequent degradation. In Homo sapiens (Human), this protein is Insulin-like growth factor-binding protein 1 (IGFBP1).